Consider the following 163-residue polypeptide: 6,7-dimethyl-8-ribityllumazine synthase (163 aa).

Residues Phe27, 58–60 (ALE), and 87–89 (CVV) contribute to the 5-amino-6-(D-ribitylamino)uracil site. 92-93 (DT) serves as a coordination point for (2S)-2-hydroxy-3-oxobutyl phosphate. Catalysis depends on His95, which acts as the Proton donor. Residue Asn120 coordinates 5-amino-6-(D-ribitylamino)uracil. (2S)-2-hydroxy-3-oxobutyl phosphate is bound at residue Arg134.

This sequence belongs to the DMRL synthase family.

The catalysed reaction is (2S)-2-hydroxy-3-oxobutyl phosphate + 5-amino-6-(D-ribitylamino)uracil = 6,7-dimethyl-8-(1-D-ribityl)lumazine + phosphate + 2 H2O + H(+). Its pathway is cofactor biosynthesis; riboflavin biosynthesis; riboflavin from 2-hydroxy-3-oxobutyl phosphate and 5-amino-6-(D-ribitylamino)uracil: step 1/2. Functionally, catalyzes the formation of 6,7-dimethyl-8-ribityllumazine by condensation of 5-amino-6-(D-ribitylamino)uracil with 3,4-dihydroxy-2-butanone 4-phosphate. This is the penultimate step in the biosynthesis of riboflavin. This chain is 6,7-dimethyl-8-ribityllumazine synthase, found in Rhodopseudomonas palustris (strain BisA53).